The following is a 54-amino-acid chain: IVAVDCSDYPKPVCSLDYMPLCGSDNTTYNNKCIFCNAVVDSNGTITLSHFGKC.

The Kazal-like domain occupies 4-54; the sequence is VDCSDYPKPVCSLDYMPLCGSDNTTYNNKCIFCNAVVDSNGTITLSHFGKC. 3 disulfide bridges follow: Cys6-Cys36, Cys14-Cys33, and Cys22-Cys54. A glycan (N-linked (GlcNAc...) asparagine) is linked at Asn43.

The protein localises to the secreted. This Haemorhous mexicanus (House finch) protein is Ovomucoid.